A 158-amino-acid polypeptide reads, in one-letter code: MLVMKLFTCFLQVLAGLAVHSQGALSAGNNSTEVEVVPFNEVWGRSYCRPMEKLVYILDEYPDEVSHIFSPSCVLLSRCSGCCGDEGLHCVPIKTANITMQILKIPPNRDPHFYVEMTFSQDVLCECRPILETTKAERRKTKGKRKRSRNSQTEEPHP.

The first 18 residues, 1-18, serve as a signal peptide directing secretion; sequence MLVMKLFTCFLQVLAGLA. N-linked (GlcNAc...) asparagine glycans are attached at residues Asn29 and Asn30. Intrachain disulfides connect Cys48–Cys90, Cys79–Cys125, and Cys83–Cys127. N-linked (GlcNAc...) asparagine glycosylation is present at Asn97. The disordered stretch occupies residues 136–158; the sequence is AERRKTKGKRKRSRNSQTEEPHP. The span at 137–149 shows a compositional bias: basic residues; that stretch reads ERRKTKGKRKRSR.

Belongs to the PDGF/VEGF growth factor family. In terms of assembly, antiparallel homodimer; disulfide-linked. Also found as heterodimer with VEGFA/VEGF.

It is found in the secreted. Growth factor active in angiogenesis and endothelial cell growth, stimulating their proliferation and migration. It binds to the receptor FLT1/VEGFR-1. Also promotes cell tumor growth. The sequence is that of Placenta growth factor (Pgf) from Mus musculus (Mouse).